The following is a 314-amino-acid chain: Ribosome maturation factor RimP (314 aa).

Disordered stretches follow at residues 1-20, 152-176, and 206-314; these read MDLDGKVQPPSAQVGQQPLS, PIEASSPIGGSKGALRLTRTDAKPE, and AAKA…PAPK. A compositionally biased stretch (polar residues) spans 10–19; the sequence is PSAQVGQQPL. Residues 215 to 227 are compositionally biased toward acidic residues; the sequence is DGNNEEQDEEQEE. Positions 247 to 256 are enriched in polar residues; that stretch reads PEHNPAQNPI. Composition is skewed to basic and acidic residues over residues 270–279 and 303–314; these read TEFKKSKTGE and SGHDMPRKPAPK.

The protein belongs to the RimP family.

It is found in the cytoplasm. Functionally, required for maturation of 30S ribosomal subunits. The polypeptide is Ribosome maturation factor RimP (Beijerinckia indica subsp. indica (strain ATCC 9039 / DSM 1715 / NCIMB 8712)).